The sequence spans 342 residues: Phosphate acyltransferase (342 aa).

Belongs to the PlsX family. In terms of assembly, homodimer. Probably interacts with PlsY.

The protein localises to the cytoplasm. It carries out the reaction a fatty acyl-[ACP] + phosphate = an acyl phosphate + holo-[ACP]. The protein operates within lipid metabolism; phospholipid metabolism. Its function is as follows. Catalyzes the reversible formation of acyl-phosphate (acyl-PO(4)) from acyl-[acyl-carrier-protein] (acyl-ACP). This enzyme utilizes acyl-ACP as fatty acyl donor, but not acyl-CoA. The sequence is that of Phosphate acyltransferase from Alkalilimnicola ehrlichii (strain ATCC BAA-1101 / DSM 17681 / MLHE-1).